The sequence spans 381 residues: Creatine kinase B-type (381 aa).

In terms of domain architecture, Phosphagen kinase N-terminal spans Lys11–Gly98. Val72 contributes to the creatine binding site. The region spanning Tyr125 to Leu367 is the Phosphagen kinase C-terminal domain. ATP-binding positions include Ser128–Arg132, Arg130, Arg132, and His191. Glu232 serves as a coordination point for creatine. Residue Arg236 participates in ATP binding. Thr282 is subject to Phosphothreonine; by autocatalysis. Position 285 (Ser285) interacts with creatine. Ser285 bears the Phosphoserine; by autocatalysis mark. Thr289 is modified (phosphothreonine; by autocatalysis). ATP is bound by residues Arg292, Arg320, Arg320–Val325, and Asp335.

Belongs to the ATP:guanido phosphotransferase family. In terms of assembly, dimer of identical or non-identical chains, which can be either B (brain type) or M (muscle type). With MM being the major form in skeletal muscle and myocardium, MB existing in myocardium, and BB existing in many tissues, especially brain. Ba-CK and Bb-CK are phosphorylated. Post-translationally, the N-terminus of BA-CK is blocked. In terms of tissue distribution, expressed in almost all tissues and found enriched in various region of the brain, retina, heart, gizzard, gut and sperm.

It is found in the cytoplasm. The protein localises to the cytosol. It localises to the mitochondrion. The protein resides in the cell membrane. The catalysed reaction is creatine + ATP = N-phosphocreatine + ADP + H(+). Functionally, reversibly catalyzes the transfer of phosphate between ATP and various phosphogens (e.g. creatine phosphate). Creatine kinase isoenzymes play a central role in energy transduction in tissues with large, fluctuating energy demands, such as skeletal muscle, heart, brain and spermatozoa. This Gallus gallus (Chicken) protein is Creatine kinase B-type.